Here is a 212-residue protein sequence, read N- to C-terminus: MKRYFVTGTDTDCGKTFVTNQLVNYFSDSAAIKPIASGCEYSENQLVNSDALLHQQQNHLPMEIVNPWRFRLPVSPHLSAREDGASIDVHKVADYCLNLQVNDIKKLFIEGAGGLMVPLNEQDTWLDFLKLTRIPVILVVGMKLGCINHTLLSQEVLEINKIKCQGWIANCLDQDMLMLDENISTLEAKLNYPLLARTNYGGKISDICLSSL.

An ATP-binding site is contributed by 12–17 (DCGKTF). A Mg(2+)-binding site is contributed by T16. K33 is a catalytic residue. S37 serves as a coordination point for substrate. ATP-binding positions include D50, 110–113 (EGAG), and 170–171 (NC). Mg(2+) is bound by residues D50 and E110.

The protein belongs to the dethiobiotin synthetase family. In terms of assembly, homodimer. Mg(2+) is required as a cofactor.

The protein localises to the cytoplasm. The enzyme catalyses (7R,8S)-7,8-diammoniononanoate + CO2 + ATP = (4R,5S)-dethiobiotin + ADP + phosphate + 3 H(+). Its pathway is cofactor biosynthesis; biotin biosynthesis; biotin from 7,8-diaminononanoate: step 1/2. Functionally, catalyzes a mechanistically unusual reaction, the ATP-dependent insertion of CO2 between the N7 and N8 nitrogen atoms of 7,8-diaminopelargonic acid (DAPA, also called 7,8-diammoniononanoate) to form a ureido ring. This is ATP-dependent dethiobiotin synthetase BioD from Legionella pneumophila subsp. pneumophila (strain Philadelphia 1 / ATCC 33152 / DSM 7513).